We begin with the raw amino-acid sequence, 359 residues long: N-acetyl-gamma-glutamyl-phosphate reductase (359 aa).

Residue Cys162 is part of the active site.

It belongs to the NAGSA dehydrogenase family. Type 1 subfamily.

The protein localises to the cytoplasm. It catalyses the reaction N-acetyl-L-glutamate 5-semialdehyde + phosphate + NADP(+) = N-acetyl-L-glutamyl 5-phosphate + NADPH + H(+). Its pathway is amino-acid biosynthesis; L-arginine biosynthesis; N(2)-acetyl-L-ornithine from L-glutamate: step 3/4. Its function is as follows. Catalyzes the NADPH-dependent reduction of N-acetyl-5-glutamyl phosphate to yield N-acetyl-L-glutamate 5-semialdehyde. The chain is N-acetyl-gamma-glutamyl-phosphate reductase from Prochlorococcus marinus (strain NATL2A).